Reading from the N-terminus, the 633-residue chain is Threonine--tRNA ligase (633 aa).

The region spanning 1-61 (MINIYFNNNL…TENCTFEVIT (61 aa)) is the TGS domain. The catalytic stretch occupies residues 242–533 (DHRKIGKELE…LIEHHSGKFP (292 aa)). Zn(2+) is bound by residues Cys-333, His-384, and His-510.

The protein belongs to the class-II aminoacyl-tRNA synthetase family. Homodimer. The cofactor is Zn(2+).

The protein resides in the cytoplasm. The catalysed reaction is tRNA(Thr) + L-threonine + ATP = L-threonyl-tRNA(Thr) + AMP + diphosphate + H(+). Its function is as follows. Catalyzes the attachment of threonine to tRNA(Thr) in a two-step reaction: L-threonine is first activated by ATP to form Thr-AMP and then transferred to the acceptor end of tRNA(Thr). Also edits incorrectly charged L-seryl-tRNA(Thr). This Ehrlichia canis (strain Jake) protein is Threonine--tRNA ligase.